The sequence spans 652 residues: Starch synthase 1, chloroplastic/amyloplastic (652 aa).

The N-terminal 49 residues, 1-49 (MASLQISGSVKFEPFVGFNRIRHFRPIASLGFPRFRRRFSIGRSLLLRR), are a transit peptide targeting the chloroplast. Lys-156 contributes to the ADP-alpha-D-glucose binding site.

Belongs to the glycosyltransferase 1 family. Bacterial/plant glycogen synthase subfamily. Expressed in roots, leaves, stems, buds and flowers.

It is found in the plastid. The protein resides in the chloroplast. The protein localises to the amyloplast. It carries out the reaction [(1-&gt;4)-alpha-D-glucosyl](n) + ADP-alpha-D-glucose = [(1-&gt;4)-alpha-D-glucosyl](n+1) + ADP + H(+). The protein operates within glycan biosynthesis; starch biosynthesis. Its function is as follows. Involved in the synthesis of short glycan chains within amylopectin in leaves. Is required to generate chains up to about a degree of polymerization of 10 (DP10). The sequence is that of Starch synthase 1, chloroplastic/amyloplastic (SS1) from Arabidopsis thaliana (Mouse-ear cress).